Here is a 156-residue protein sequence, read N- to C-terminus: SsrA-binding protein (156 aa).

It belongs to the SmpB family.

It localises to the cytoplasm. Required for rescue of stalled ribosomes mediated by trans-translation. Binds to transfer-messenger RNA (tmRNA), required for stable association of tmRNA with ribosomes. tmRNA and SmpB together mimic tRNA shape, replacing the anticodon stem-loop with SmpB. tmRNA is encoded by the ssrA gene; the 2 termini fold to resemble tRNA(Ala) and it encodes a 'tag peptide', a short internal open reading frame. During trans-translation Ala-aminoacylated tmRNA acts like a tRNA, entering the A-site of stalled ribosomes, displacing the stalled mRNA. The ribosome then switches to translate the ORF on the tmRNA; the nascent peptide is terminated with the 'tag peptide' encoded by the tmRNA and targeted for degradation. The ribosome is freed to recommence translation, which seems to be the essential function of trans-translation. This Clostridium tetani (strain Massachusetts / E88) protein is SsrA-binding protein.